Here is a 109-residue protein sequence, read N- to C-terminus: Small ribosomal subunit protein uS17 (109 aa).

The protein belongs to the universal ribosomal protein uS17 family. Part of the 30S ribosomal subunit.

One of the primary rRNA binding proteins, it binds specifically to the 5'-end of 16S ribosomal RNA. This is Small ribosomal subunit protein uS17 from Thermoplasma acidophilum (strain ATCC 25905 / DSM 1728 / JCM 9062 / NBRC 15155 / AMRC-C165).